Consider the following 402-residue polypeptide: Bacillibactin exporter (402 aa).

Helical transmembrane passes span 4–24, 39–59, 69–89, 104–124, 162–182, 212–232, 247–267, 278–298, 302–322, 342–362, and 368–388; these read IIAL…LIPV, VSLI…IAGY, ILLP…FAST, LQGI…GDLF, FVPF…VLFL, WLYT…GVLF, VAKG…SFIA, MKFC…ALWW, FYFL…ALPA, FYNS…AALM, and IIFI…LFTV.

The protein belongs to the major facilitator superfamily.

The protein resides in the cell membrane. Its function is as follows. Involved in secretion of bacillibactin. In Bacillus subtilis (strain 168), this protein is Bacillibactin exporter (ymfD).